The sequence spans 558 residues: V-set and immunoglobulin domain-containing protein 10 (558 aa).

The signal sequence occupies residues 1-20; it reads MAGLRVLLCLGALLARQGSA. At 21-426 the chain is on the extracellular side; it reads GLQLLLNPSR…IWLSVKEPLN (406 aa). N32, N60, N121, N150, N159, and N218 each carry an N-linked (GlcNAc...) asparagine glycan. Ig-like C2-type domains follow at residues 37 to 140, 144 to 235, 248 to 327, and 332 to 420; these read PNSE…RLRV, PAYV…RKVT, PQCS…VKLS, and PSQP…IWLS. A disulfide bridge links C65 with C124. 2 disulfide bridges follow: C174–C221 and C265–C308. N344 carries an N-linked (GlcNAc...) asparagine glycan. Cysteines 349 and 404 form a disulfide. The helical transmembrane segment at 427-447 threads the bilayer; that stretch reads IGGIVGTVVSLLLLGLAVVSG. The Cytoplasmic segment spans residues 448-558; the sequence is LTLYYSPAFW…GIVQEDGKPV (111 aa). Residues 477-506 are compositionally biased toward acidic residues; sequence DSEEEEEEEEEEEEKEDVAEEVEQETNETE. Disordered regions lie at residues 477-515 and 532-558; these read DSEE…ISKH and MGNG…GKPV.

It localises to the membrane. The protein is V-set and immunoglobulin domain-containing protein 10 (Vsig10) of Mus musculus (Mouse).